The primary structure comprises 424 residues: Circumsporozoite protein (424 aa).

A signal peptide spans Met-1–Ala-18. The interval Ser-69–Ser-339 is disordered. Residues Asn-85–Arg-106 show a composition bias toward basic and acidic residues. The tract at residues Thr-104–Lys-111 is required for the binding to heparan sulfate proteoglycans (HSPGs) on the surface of host hepatocytes. The region I; contains the proteolytic cleavage site stretch occupies residues Lys-112 to Pro-116. Low complexity predominate over residues Asn-120–Asn-300. 44 tandem repeats follow at residues Pro-123–Asn-126, Pro-127–Asp-130, Pro-131–Asn-134, Pro-135–Asp-138, Pro-139–Asn-142, Pro-143–Asp-146, Pro-147–Asn-150, Pro-151–Asn-154, Pro-155–Asn-158, Pro-159–Asn-162, Pro-163–Asn-166, Pro-167–Asn-170, Pro-171–Asn-174, Pro-175–Asn-178, Pro-179–Asn-182, Pro-183–Asn-186, Pro-187–Asn-190, Pro-191–Asn-194, Pro-195–Asn-198, Pro-199–Asn-202, Pro-203–Asn-206, Pro-207–Asn-210, Pro-211–Asn-214, Pro-215–Asn-218, Pro-219–Asn-222, Pro-223–Asn-226, Pro-227–Asn-230, Pro-231–Asn-234, Pro-235–Asn-238, Pro-239–Asn-242, Pro-243–Asn-246, Pro-247–Asn-250, Pro-251–Asn-254, Pro-255–Asn-258, Pro-259–Asn-262, Pro-263–Asn-266, Pro-267–Asn-270, Pro-271–Asn-274, Pro-275–Asn-278, Pro-279–Asn-282, Pro-283–Asn-286, Pro-287–Asn-290, Pro-291–Asn-294, and Pro-295–Asn-298. Residues Pro-123–Asn-298 are 44 X 4 AA tandem repeats of P-N-[AV]-[ND]. Over residues Lys-301–Pro-316 the composition is skewed to polar residues. A compositionally biased stretch (low complexity) spans Glu-322–Glu-336. The TSP type-1 domain occupies Lys-349–Ser-402. Intrachain disulfides connect Cys-361–Cys-396 and Cys-365–Cys-401. Thr-364 carries O-linked (Fuc) threonine glycosylation. Cys-401 carries GPI-anchor amidated cysteine lipidation. The propeptide at Ser-402–Asn-424 is removed in mature form.

It belongs to the plasmodium circumsporozoite protein family. Post-translationally, during host cell invasion, proteolytically cleaved at the cell membrane in the region I by a papain-like cysteine protease of parasite origin. Cleavage is triggered by the sporozoite contact with highly sulfated heparan sulfate proteoglycans (HSPGs) present on the host hepatocyte cell surface. Cleavage exposes the TSP type-1 (TSR) domain and is required for productive invasion of host hepatocytes but not for adhesion to the host cell membrane. Cleavage is dispensable for sporozoite development in the oocyst, motility and for traversal of host and vector cells. In terms of processing, O-glycosylated; maybe by POFUT2.

It is found in the cell membrane. Its subcellular location is the cytoplasm. Its function is as follows. Essential sporozoite protein. In the mosquito vector, required for sporozoite development in the oocyst, migration through the vector hemolymph and entry into the vector salivary glands. In the vertebrate host, required for sporozoite migration through the host dermis and infection of host hepatocytes. Binds to highly sulfated heparan sulfate proteoglycans (HSPGs) on the surface of host hepatocytes. In the vertebrate host, binds to highly sulfated heparan sulfate proteoglycans (HSPGs) on the surface of host hepatocytes and is required for sporozoite invasion of the host hepatocytes. This chain is Circumsporozoite protein, found in Plasmodium falciparum (isolate t4 / Thailand).